We begin with the raw amino-acid sequence, 507 residues long: Maturase K (507 aa).

This sequence belongs to the intron maturase 2 family. MatK subfamily.

The protein resides in the plastid. The protein localises to the chloroplast. In terms of biological role, usually encoded in the trnK tRNA gene intron. Probably assists in splicing its own and other chloroplast group II introns. This is Maturase K from Lens culinaris (Lentil).